The chain runs to 269 residues: Formamidopyrimidine-DNA glycosylase (269 aa).

The active-site Schiff-base intermediate with DNA is the Pro-2. Glu-3 functions as the Proton donor in the catalytic mechanism. The Proton donor; for beta-elimination activity role is filled by Lys-57. His-90, Arg-109, and Lys-150 together coordinate DNA. An FPG-type zinc finger spans residues 235–269 (RVYGRNGEPCRTCGTPIETAKHGQRSTFFCRRCQK). Arg-259 serves as the catalytic Proton donor; for delta-elimination activity.

Belongs to the FPG family. In terms of assembly, monomer. Zn(2+) serves as cofactor.

The enzyme catalyses Hydrolysis of DNA containing ring-opened 7-methylguanine residues, releasing 2,6-diamino-4-hydroxy-5-(N-methyl)formamidopyrimidine.. It carries out the reaction 2'-deoxyribonucleotide-(2'-deoxyribose 5'-phosphate)-2'-deoxyribonucleotide-DNA = a 3'-end 2'-deoxyribonucleotide-(2,3-dehydro-2,3-deoxyribose 5'-phosphate)-DNA + a 5'-end 5'-phospho-2'-deoxyribonucleoside-DNA + H(+). Functionally, involved in base excision repair of DNA damaged by oxidation or by mutagenic agents. Acts as a DNA glycosylase that recognizes and removes damaged bases. Has a preference for oxidized purines, such as 7,8-dihydro-8-oxoguanine (8-oxoG). Has AP (apurinic/apyrimidinic) lyase activity and introduces nicks in the DNA strand. Cleaves the DNA backbone by beta-delta elimination to generate a single-strand break at the site of the removed base with both 3'- and 5'-phosphates. The polypeptide is Formamidopyrimidine-DNA glycosylase (Pectobacterium carotovorum subsp. carotovorum (strain PC1)).